The following is a 269-amino-acid chain: Glutamate racemase (269 aa).

Residues 11 to 12 and 43 to 44 contribute to the substrate site; these read DS and YG. Cysteine 74 serves as the catalytic Proton donor/acceptor. 75-76 lines the substrate pocket; that stretch reads NT. Cysteine 185 (proton donor/acceptor) is an active-site residue. A substrate-binding site is contributed by 186–187; sequence TH.

Belongs to the aspartate/glutamate racemases family.

The enzyme catalyses L-glutamate = D-glutamate. The protein operates within cell wall biogenesis; peptidoglycan biosynthesis. Its function is as follows. Provides the (R)-glutamate required for cell wall biosynthesis. The polypeptide is Glutamate racemase (Bacillus cereus (strain ATCC 10987 / NRS 248)).